The chain runs to 249 residues: Putative adhesin RC1281 (249 aa).

An N-terminal signal peptide occupies residues 1-22 (MKKLLLIAAASTALLTSGLSFA).

Functionally, adheres to biotinylated epithelial (Vero cell) proteins. In Rickettsia conorii (strain ATCC VR-613 / Malish 7), this protein is Putative adhesin RC1281.